A 622-amino-acid chain; its full sequence is Protein lev-9 (622 aa).

The N-terminal stretch at 1-16 is a signal peptide; the sequence is MRFLLLLAISITYASA. In terms of domain architecture, WAP; atypical spans 17 to 61; the sequence is LSCPEVTLSQRPKHCKKECIADEDCKRNKRCMCDGECGLSCVNPI. Intrachain disulfides connect cysteine 19–cysteine 49, cysteine 35–cysteine 47, cysteine 41–cysteine 57, cysteine 64–cysteine 105, cysteine 91–cysteine 118, cysteine 124–cysteine 171, cysteine 154–cysteine 188, cysteine 193–cysteine 233, cysteine 219–cysteine 246, cysteine 251–cysteine 291, cysteine 277–cysteine 304, cysteine 309–cysteine 349, cysteine 335–cysteine 362, cysteine 366–cysteine 409, cysteine 395–cysteine 420, cysteine 425–cysteine 467, cysteine 452–cysteine 481, cysteine 486–cysteine 543, and cysteine 529–cysteine 556. Sushi domains lie at 62–120, 122–190, 191–248, 249–306, 307–364, 365–422, 423–483, and 484–558; these read AMCH…VCRL, LKCG…RCKA, RACP…NCKA, TECS…RCEE, IRCS…RCLA, SCRV…VCSP, LSCH…KCLP, and SWCE…KCVS. Asparagine 411 carries N-linked (GlcNAc...) asparagine glycosylation. Residues 576–622 constitute a propeptide that is removed on maturation; sequence SLPGRAVREYVDDELSTHRQHSGKCGIVSGKLERMIMQHSDNGVSVC.

Post-translationally, proteolytic processing of the C-terminus is required for clustering activity but not for secretion nor traffic.

It localises to the synapse. It is found in the secreted. Its function is as follows. Scaffolding protein that is necessary to cluster acetylcholine receptors at neuromuscular junctions. The protein is Protein lev-9 (lev-9) of Caenorhabditis elegans.